The sequence spans 132 residues: Antileukoproteinase (132 aa).

A signal peptide spans Met-1–Gly-24. The WAP 1 domain maps to Glu-28–Val-76. Intrachain disulfides connect Cys-35–Cys-64, Cys-43–Cys-68, Cys-51–Cys-63, and Cys-57–Cys-72. The N-linked (GlcNAc...) asparagine glycan is linked to Asn-77. Residues Val-82 to Val-130 form the WAP 2 domain. 4 disulfide bridges follow: Cys-89/Cys-118, Cys-96/Cys-122, Cys-105/Cys-117, and Cys-111/Cys-126.

In terms of assembly, interacts with GRN; interaction protects progranulin from proteolysis. Detected in bronchoalveolar fluid (at protein level). Detected in large and small intestine, trachea, skin, lung and tongue.

It is found in the secreted. Its function is as follows. Acid-stable proteinase inhibitor with strong affinities for trypsin, chymotrypsin, elastase, and cathepsin G. Modulates the inflammatory and immune responses after bacterial infection, and after infection by the intracellular parasite L.major. Down-regulates responses to bacterial lipopolysaccharide (LPS). Plays a role in regulating the activation of NF-kappa-B and inflammatory responses. Has antimicrobial activity against mycobacteria, but not against salmonella. Contributes to normal resistance against infection by M.tuberculosis. Required for normal resistance to infection by L.major. Required for normal wound healing, probably by preventing tissue damage by limiting protease activity. Together with ELANE, required for normal differentiation and proliferation of bone marrow myeloid cells. The protein is Antileukoproteinase (SLPI) of Ovis aries (Sheep).